Here is a 1199-residue protein sequence, read N- to C-terminus: MALKMVKGSIDRMFDKNLQDLVRGIRNHKEDEAKYISQCIDEIKQELKQDNIAVKANAVCKLTYLQMLGYDISWAAFNIIEVMSASKFTFKRVGYLAASQCFHEGTDVIMLTTNQIRKDLSSPSQYDTGVALTGLSCFVTPDLARDLANDIMTLMSHTKPYIRKKAVLIMYKVFLKYPESLRPAFPRLKEKLEDPDPGVQSAAVNVICELARRNPKNYLSLAPLFFKLMTSSTNNWVLIKIIKLFGALTPLEPRLGKKLIEPLTNLIHSTSAMSLLYECVNTVIAVLISLSSGMPNHSASIQLCVQKLRILIEDSDQNLKYLGLLAMSKILKTHPKSVQSHKDLILQCLDDKDESIRLRALDLLYGMVSKKNLMEIVKKLMTHVDKAEGTTYRDELLTKIIDICSQSNYQHITNFEWYISILVELTRLEGTRHGHLIAAQMLDVAIRVKAIRKFAVSQMSSLLDSAHLVASSTQRNGICEVLYAAAWICGEFSEHLQGPQQTLEAMLRPKVTTLPGHIQAVYVQNVVKLYASILQQKEQAADTEAAQEVTQLLVERLPQFVQSADLEVQERASCILQLVKHVQKLQAKGVPVAEEVSALFAGELNPVAPKAQKKVPVPEGLDLDAWINEPPSDSESEDEKPKAIFHEEEPRHTRRRQPEEDEEELARRREARKQEQANNPFYIKSSPSPQKRYQDAPGVEHIPVVQIDLSVPLKVPGMPMSDQYVKLEEQRRHRQRLEKDKKRKKKEKGKRRHSSLPTESDEDIAPAQRVDIITEEMPENALPSDEDDKDPNDPYRALDIDLDKPLADSEKLPVQKHRNAEAVKSPEKEGVLGVEKKSKKPKKKEKKTKEREREKKDKKGEDLDFWLSTTPPPAAAPIPAPSTEELAASTITSPKDECEVLKGEEEDHVDHDQERKSSRHKKKKHRKEKEKEERPRDKKKAKKKQVAPLENGAAAEEEEEPIPPMSSYCLLAESPYIKVTYDIQASLQKDSQVTVSIILENQSSSFLKNMELNVLDSLNTKMTRPEGSSVHDGVPVPFQLPPGVSNEAQFVFTIQSIVMAQKLKGTLSFIAKDDEGATHEKLDFRLHFSCSSYLITTPCYSDAFAKLLESGDLSMNSIKVDGISMSFQNLLAKICFYHHFSVVERVDSCASMYSRSIQGHHVCLLVKKGESSVSVDGKCSDATLLSSLLEEMKTTLAQC.

Alanine 2 bears the N-acetylalanine mark. HEAT repeat units follow at residues 34–71, 142–179, 180–216, 218–254, 257–296, 298–336, 337–373, 375–409, and 521–558; these read KYISQCIDEIKQELKQDNIAVKANAVCKLTYLQMLGYD, DLARDLANDIMTLMSHTKPYIRKKAVLIMYKVFLKYPE, SLRPAFPRLKEKLEDPDPGVQSAAVNVICELARRNPK, YLSLAPLFFKLMTSSTNNWVLIKIIKLFGALTPLEPR, KKLIEPLTNLIHSTSAMSLLYECVNTVIAVLISLSSGMPN, SASIQLCVQKLRILIEDSDQNLKYLGLLAMSKILKTHPK, SVQSHKDLILQCLDDKDESIRLRALDLLYGMVSKKNL, EIVKKLMTHVDKAEGTTYRDELLTKIIDICSQSNY, and VYVQNVVKLYASILQQKEQAADTEAAQEVTQLLVERLP. 2 disordered regions span residues 623–695 and 724–963; these read LDAW…RYQD and YVKL…EPIP. Serine 632, serine 634, and serine 636 each carry phosphoserine. Composition is skewed to basic and acidic residues over residues 639-651 and 665-675; these read EKPKAIFHEEEPR and LARRREARKQE. Residues 659 to 679 are a coiled coil; sequence EEDEEELARRREARKQEQANN. Serine 688 is modified (phosphoserine). The stretch at 722–750 forms a coiled coil; that stretch reads DQYVKLEEQRRHRQRLEKDKKRKKKEKGK. The span at 732–754 shows a compositional bias: basic residues; the sequence is RHRQRLEKDKKRKKKEKGKRRHS. Serine 754 and serine 755 each carry phosphoserine. Threonine 758 carries the phosphothreonine modification. Phosphoserine occurs at positions 760, 784, and 825. Positions 773–790 are enriched in acidic residues; that stretch reads ITEEMPENALPSDEDDKD. Over residues 791–836 the composition is skewed to basic and acidic residues; sequence PNDPYRALDIDLDKPLADSEKLPVQKHRNAEAVKSPEKEGVLGVEK. The span at 837 to 846 shows a compositional bias: basic residues; that stretch reads KSKKPKKKEK. Residues 843–863 are a coiled coil; sequence KKEKKTKEREREKKDKKGEDL. A compositionally biased stretch (basic and acidic residues) spans 847–862; the sequence is KTKEREREKKDKKGED. Residues 870–880 are compositionally biased toward pro residues; the sequence is TPPPAAAPIPA. Over residues 894 to 916 the composition is skewed to basic and acidic residues; sequence PKDECEVLKGEEEDHVDHDQERK. A coiled-coil region spans residues 911–934; it reads HDQERKSSRHKKKKHRKEKEKEER. The segment covering 917–928 has biased composition (basic residues); sequence SSRHKKKKHRKE.

It belongs to the adaptor complexes large subunit family. In terms of assembly, adaptor protein complex 3 (AP-3) is a heterotetramer composed of two large adaptins (delta-type subunit AP3D1 and beta-type subunit AP3B1 or AP3B2), a medium adaptin (mu-type subunit AP3M1 or AP3M2) and a small adaptin (sigma-type subunit APS1 or AP3S2). AP-3 associates with the BLOC-1 complex. Interacts with SLC30A2. Interacts with CLN3 (via dileucine motif); this interaction facilitates lysosomal targeting.

The protein resides in the cytoplasm. The protein localises to the golgi apparatus membrane. Part of the AP-3 complex, an adaptor-related complex which is not clathrin-associated. The complex is associated with the Golgi region as well as more peripheral structures. It facilitates the budding of vesicles from the Golgi membrane and may be directly involved in trafficking to lysosomes. Involved in process of CD8+ T-cell and NK cell degranulation. In concert with the BLOC-1 complex, AP-3 is required to target cargos into vesicles assembled at cell bodies for delivery into neurites and nerve terminals. The polypeptide is AP-3 complex subunit delta-1 (Ap3d1) (Mus musculus (Mouse)).